The primary structure comprises 444 residues: Shufflon protein B' (444 aa).

Residues Met1–Gly361 are constant region. The variable region stretch occupies residues Thr362 to Gln444.

This chain is Shufflon protein B', found in Escherichia coli.